A 432-amino-acid chain; its full sequence is Putative D-alanyl-D-alanine carboxypeptidase (432 aa).

The helical; Signal-anchor transmembrane segment at alanine 7–leucine 25 threads the bilayer.

This sequence belongs to the peptidase S12 family. YfeW subfamily.

The protein resides in the cell inner membrane. The catalysed reaction is Preferential cleavage: (Ac)2-L-Lys-D-Ala-|-D-Ala. Also transpeptidation of peptidyl-alanyl moieties that are N-acyl substituents of D-alanine.. This Salmonella typhi protein is Putative D-alanyl-D-alanine carboxypeptidase.